The primary structure comprises 615 residues: Sodium-dependent neutral amino acid transporter B(0)AT3 (615 aa).

The Cytoplasmic portion of the chain corresponds to 1–26 (MAQASGMDPLVDIEDERPKWDNKLQY). The chain crosses the membrane as a helical span at residues 27–47 (LLSCIGFAVGLGNIWRFPYLC). The Extracellular segment spans residues 48 to 52 (HTHGG). The chain crosses the membrane as a helical span at residues 53–73 (GAFLIPYFIALVFEGIPLFYI). Residues 74–105 (ELAIGQRLRRGSIGVWKTISPYLGGVGLGCFS) are Cytoplasmic-facing. A helical membrane pass occupies residues 106 to 126 (VSFLVSLYYNTILLWVLWFFL). Over 127–177 (NSFQHPLPWSTCPLDLNRTGFVQECQSSGTVSYFWYRQTLNITSDISNTGT) the chain is Extracellular. N-linked (GlcNAc...) asparagine glycosylation is found at Asn143 and Asn167. The helical transmembrane segment at 178 to 198 (IQWKLFLCLVACWTTVYLCVI) threads the bilayer. Topologically, residues 199-206 (RGIESTGK) are cytoplasmic. The helical transmembrane segment at 207-227 (VIYFTALFPYLVLTIFLIRGL) threads the bilayer. Residues 228–255 (TLPGATEGLTYLFTPNMKILQNSRVWLD) lie on the Extracellular side of the membrane. Residues 256–276 (AATQIFFSLSLAFGGHIAFAS) traverse the membrane as a helical segment. The Cytoplasmic portion of the chain corresponds to 277–290 (YNQPRNNCEKDAVT). Residues 291 to 311 (IALVNSMTSLYASITIFSIMG) form a helical membrane-spanning segment. At 312-397 (FKASNDYGRC…FTEAVLHMPG (86 aa)) the chain is on the extracellular side. An N-linked (GlcNAc...) asparagine glycan is attached at Asn353. Residues 398–418 (ASVWSVLFFGMLFTLGLSSMF) traverse the membrane as a helical segment. Topologically, residues 419 to 442 (GNMEGVITPLFDMGILPKGVPKET) are cytoplasmic. Residues 443–463 (MTGVVCFICFLSAICFTLQSG) form a helical membrane-spanning segment. Over 464–472 (SYWLEIFDS) the chain is Extracellular. The helical transmembrane segment at 473–493 (FAASLNLIIFAFMEVVGVIHV) threads the bilayer. The Cytoplasmic segment spans residues 494–520 (YGIKRFCDDIEWMTGRRPSLYWQVTWR). The helical transmembrane segment at 521 to 541 (VVSPMLLFGIFLSYIVLLAQS) threads the bilayer. The Extracellular segment spans residues 542–571 (SPSYKAWNPQYEHFPSREEKLYPGWVQVTC). The helical transmembrane segment at 572-592 (VLLSFLPSLWVPGIALAQLLF) threads the bilayer. The Cytoplasmic segment spans residues 593–615 (QYRQRWKNTHLESALKPQESRGC).

This sequence belongs to the sodium:neurotransmitter symporter (SNF) (TC 2.A.22) family. SLC6A18 subfamily. As to quaternary structure, interacts with CLTRN; this interaction regulates the trafficking of SLC6A18 to the cell membrane and its activity. As to expression, kidney-specific expression.

The protein localises to the apical cell membrane. Its subcellular location is the cell membrane. The catalysed reaction is L-alanine(out) + chloride(out) + 2 Na(+)(out) = L-alanine(in) + chloride(in) + 2 Na(+)(in). The enzyme catalyses glycine(out) + chloride(out) + 2 Na(+)(out) = glycine(in) + chloride(in) + 2 Na(+)(in). It catalyses the reaction L-methionine(out) + chloride(out) + 2 Na(+)(out) = L-methionine(in) + chloride(in) + 2 Na(+)(in). It carries out the reaction L-valine(out) + chloride(out) + 2 Na(+)(out) = L-valine(in) + chloride(in) + 2 Na(+)(in). The catalysed reaction is L-isoleucine(out) + chloride(out) + 2 Na(+)(out) = L-isoleucine(in) + chloride(in) + 2 Na(+)(in). The enzyme catalyses L-serine(out) + chloride(out) + 2 Na(+)(out) = L-serine(in) + chloride(in) + 2 Na(+)(in). It catalyses the reaction L-leucine(out) + chloride(out) + 2 Na(+)(out) = L-leucine(in) + chloride(in) + 2 Na(+)(in). Its function is as follows. Symporter that transports one amino acid molecule together with two sodium and one chloride ions in kidneys and plays a role in the neutral amino acids reabsorption. Preferentially transports neutral amino acids such as L-glycine and L-alanine but also other neutral amino acids. Required CLTRN for cell surface expression and for its amino acid transporter activity. The transport mechanism is pH-independent. In Rattus norvegicus (Rat), this protein is Sodium-dependent neutral amino acid transporter B(0)AT3.